Here is a 202-residue protein sequence, read N- to C-terminus: Riboflavin synthase (202 aa).

Lumazine-binding repeat units lie at residues 1-101 (MFTG…MGGH) and 102-198 (LVFG…ARLA). Residues 4-6 (GII), 47-49 (CLT), 66-68 (EAW), 105-107 (GHV), K140, 149-151 (SLT), and 163-168 (LLIRHS) each bind 2,4-dihydroxypteridine.

In terms of assembly, homotrimer.

The enzyme catalyses 2 6,7-dimethyl-8-(1-D-ribityl)lumazine + H(+) = 5-amino-6-(D-ribitylamino)uracil + riboflavin. It participates in cofactor biosynthesis; riboflavin biosynthesis; riboflavin from 2-hydroxy-3-oxobutyl phosphate and 5-amino-6-(D-ribitylamino)uracil: step 2/2. Is inhibited by riboflavin. Product inhibition may be the major mechanism by which RS regulates its enzymatic activity in vivo. Catalyzes the dismutation of two molecules of 6,7-dimethyl-8-ribityllumazine, resulting in the formation of riboflavin and 5-amino-6-(D-ribitylamino)uracil. This chain is Riboflavin synthase, found in Brucella abortus (strain 2308).